A 343-amino-acid chain; its full sequence is Olfactory receptor 6K6 (343 aa).

The Extracellular segment spans residues 1 to 53; it reads MKQYSVGNQHSNYRSLLFPFLCSQMTQLTASGNQTMVTEFLFSMFPHAHRGGL. Asn-33 carries an N-linked (GlcNAc...) asparagine glycan. Residues 54–74 form a helical membrane-spanning segment; that stretch reads LFFIPLLLIYGFILTGNLIMF. Residues 75–82 are Cytoplasmic-facing; the sequence is IVIQVGMA. A helical transmembrane segment spans residues 83 to 103; it reads LHTPLYFFISVLSFLEICYTT. Residues 104–127 are Extracellular-facing; that stretch reads TTIPKMLSCLISEQKSISVAGCLL. Cys-125 and Cys-217 are disulfide-bonded. A helical membrane pass occupies residues 128-148; it reads QMYFFHSLGITESCVLTAMAI. Residues 149–167 lie on the Cytoplasmic side of the membrane; it reads DRYIAICNPLRYPTIMIPK. The chain crosses the membrane as a helical span at residues 168 to 188; it reads LCIQLTVGSCFCGFLLVLPEI. Residues 189 to 224 are Extracellular-facing; the sequence is AWISTLPFCGSNQIHQIFCDFTPVLSLACTDTFLVV. Residues 225 to 244 traverse the membrane as a helical segment; that stretch reads IVDAIHAAEIVASFLVIALS. The Cytoplasmic segment spans residues 245–264; that stretch reads YIRIIIVILGMHSAEGHHKA. The chain crosses the membrane as a helical span at residues 265–285; that stretch reads FSTCAAHLAVFLLFFGSVAVM. The Extracellular portion of the chain corresponds to 286 to 298; sequence YLRFSATYSVFWD. Residues 299–319 form a helical membrane-spanning segment; sequence TAIAVTFVILAPFFNPIIYSL. The Cytoplasmic portion of the chain corresponds to 320 to 343; sequence KNKDMKEAIGRLFHYQKRAGWAGK.

Belongs to the G-protein coupled receptor 1 family.

Its subcellular location is the cell membrane. Odorant receptor. The protein is Olfactory receptor 6K6 (OR6K6) of Homo sapiens (Human).